A 338-amino-acid polypeptide reads, in one-letter code: Nickel transporter NixA (338 aa).

Helical transmembrane passes span 11 to 31 (WLPY…FLWI), 37 to 57 (HILF…AFDA), 79 to 99 (GVGF…AVFL), 127 to 147 (FFLV…INLF), 187 to 207 (VLPL…IALL), 217 to 237 (AISF…MSLL), 266 to 286 (ITAI…LQIL), and 307 to 327 (YLGY…SLIW).

This sequence belongs to the NiCoT transporter (TC 2.A.52) family.

It localises to the cell membrane. In terms of biological role, secondary nickel transporter. Required for full urease activity. The protein is Nickel transporter NixA of Staphylococcus aureus (strain NCTC 8325 / PS 47).